Here is a 223-residue protein sequence, read N- to C-terminus: uncharacterized protein (223 aa).

7 helical membrane passes run 25–45, 46–66, 78–98, 105–125, 140–160, 161–181, and 199–219; these read TYFL…ATMA, IGIS…ILFF, LVWT…MLNF, GPIV…GLSA, FLFA…FVGS, TVAH…FILF, and ISMY…LGIM.

It belongs to the BI1 family.

The protein resides in the cell membrane. This is an uncharacterized protein from Vibrio cholerae serotype O1 (strain ATCC 39315 / El Tor Inaba N16961).